We begin with the raw amino-acid sequence, 270 residues long: Protein US2 homolog (270 aa).

It belongs to the herpesviridae US2 family.

This Gallid herpesvirus 2 (strain Chicken/Md5/ATCC VR-987) (GaHV-2) protein is Protein US2 homolog (MDV091).